We begin with the raw amino-acid sequence, 391 residues long: Formate-dependent phosphoribosylglycinamide formyltransferase (391 aa).

N(1)-(5-phospho-beta-D-ribosyl)glycinamide is bound by residues 20–21 (EL) and glutamate 80. Residues arginine 112, lysine 153, 158–163 (SSGKGQ), 193–196 (EGFV), and glutamate 201 each bind ATP. Residues 117–306 (RLAAEELQLP…EFALHVRAFT (190 aa)) enclose the ATP-grasp domain. The Mg(2+) site is built by glutamate 265 and glutamate 277. N(1)-(5-phospho-beta-D-ribosyl)glycinamide is bound by residues aspartate 284, lysine 354, and 361 to 362 (RR).

It belongs to the PurK/PurT family. Homodimer.

It carries out the reaction N(1)-(5-phospho-beta-D-ribosyl)glycinamide + formate + ATP = N(2)-formyl-N(1)-(5-phospho-beta-D-ribosyl)glycinamide + ADP + phosphate + H(+). It functions in the pathway purine metabolism; IMP biosynthesis via de novo pathway; N(2)-formyl-N(1)-(5-phospho-D-ribosyl)glycinamide from N(1)-(5-phospho-D-ribosyl)glycinamide (formate route): step 1/1. Its function is as follows. Involved in the de novo purine biosynthesis. Catalyzes the transfer of formate to 5-phospho-ribosyl-glycinamide (GAR), producing 5-phospho-ribosyl-N-formylglycinamide (FGAR). Formate is provided by PurU via hydrolysis of 10-formyl-tetrahydrofolate. The polypeptide is Formate-dependent phosphoribosylglycinamide formyltransferase (Aliivibrio fischeri (strain ATCC 700601 / ES114) (Vibrio fischeri)).